The sequence spans 134 residues: Small ribosomal subunit protein uS9c (134 aa).

The protein belongs to the universal ribosomal protein uS9 family.

The protein localises to the plastid. The protein resides in the chloroplast. The protein is Small ribosomal subunit protein uS9c (rps9) of Euglena gracilis.